Reading from the N-terminus, the 432-residue chain is Adenylosuccinate synthetase (432 aa).

Residues 13–19 (GDEGKGK) and 41–43 (GHT) each bind GTP. Aspartate 14 acts as the Proton acceptor in catalysis. Positions 14 and 41 each coordinate Mg(2+). Residues 14–17 (DEGK), 39–42 (NAGH), threonine 130, arginine 144, glutamine 225, threonine 240, and arginine 304 each bind IMP. Histidine 42 serves as the catalytic Proton donor. 300-306 (ATTGRRR) contributes to the substrate binding site. GTP contacts are provided by residues arginine 306, 332–334 (KLD), and 415–417 (STG).

This sequence belongs to the adenylosuccinate synthetase family. Homodimer. Requires Mg(2+) as cofactor.

It localises to the cytoplasm. The enzyme catalyses IMP + L-aspartate + GTP = N(6)-(1,2-dicarboxyethyl)-AMP + GDP + phosphate + 2 H(+). It participates in purine metabolism; AMP biosynthesis via de novo pathway; AMP from IMP: step 1/2. Functionally, plays an important role in the de novo pathway of purine nucleotide biosynthesis. Catalyzes the first committed step in the biosynthesis of AMP from IMP. This is Adenylosuccinate synthetase from Enterobacter sp. (strain 638).